The following is a 486-amino-acid chain: Protein DETOXIFICATION 27 (486 aa).

A disordered region spans residues 1 to 25 (MRGGDGEEGSESRVALLKSPHTAEE). Transmembrane regions (helical) follow at residues 41 to 61 (LWQIVGPAIFSRVTTYSMLVI), 74 to 94 (LAAISIVNNVTVGFNFGLLLG), 124 to 144 (IVLFFCCVLLLPTYIFTTPVL), 153 to 173 (IAELSGVVAIWVIPLHFAFTL), 189 to 209 (VTAYAAAVALVVHILVCWLFV), 216 to 236 (VVGTVATISISWWVNVLILLV), 269 to 289 (GVMLCLENWYYRILIIMTGNL), 299 to 319 (LSICMAINGWEMMIPLAFFAG), 349 to 369 (IIGLFFWVLIMLLHNQIAWIF), 384 to 404 (LLLAFTVLLNSVQPVLSGVAV), 407 to 427 (GWQSYVAYINLGCYYCIGVPL), and 439 to 461 (VMGIWGGMIFGGTAVQTMILSFI).

The protein belongs to the multi antimicrobial extrusion (MATE) (TC 2.A.66.1) family.

It is found in the membrane. This Arabidopsis thaliana (Mouse-ear cress) protein is Protein DETOXIFICATION 27.